Here is a 66-residue protein sequence, read N- to C-terminus: Large ribosomal subunit protein bL35 (66 aa).

The protein belongs to the bacterial ribosomal protein bL35 family.

This chain is Large ribosomal subunit protein bL35, found in Caulobacter vibrioides (strain ATCC 19089 / CIP 103742 / CB 15) (Caulobacter crescentus).